Reading from the N-terminus, the 428-residue chain is Serine--tRNA ligase (428 aa).

Residue 231–233 (TAE) coordinates L-serine. Position 262 to 264 (262 to 264 (RSE)) interacts with ATP. Glu285 is a binding site for L-serine. 349-352 (EISS) is an ATP binding site. An L-serine-binding site is contributed by Ser385.

This sequence belongs to the class-II aminoacyl-tRNA synthetase family. Type-1 seryl-tRNA synthetase subfamily. In terms of assembly, homodimer. The tRNA molecule binds across the dimer.

Its subcellular location is the cytoplasm. The enzyme catalyses tRNA(Ser) + L-serine + ATP = L-seryl-tRNA(Ser) + AMP + diphosphate + H(+). It catalyses the reaction tRNA(Sec) + L-serine + ATP = L-seryl-tRNA(Sec) + AMP + diphosphate + H(+). The protein operates within aminoacyl-tRNA biosynthesis; selenocysteinyl-tRNA(Sec) biosynthesis; L-seryl-tRNA(Sec) from L-serine and tRNA(Sec): step 1/1. Its function is as follows. Catalyzes the attachment of serine to tRNA(Ser). Is also able to aminoacylate tRNA(Sec) with serine, to form the misacylated tRNA L-seryl-tRNA(Sec), which will be further converted into selenocysteinyl-tRNA(Sec). The chain is Serine--tRNA ligase from Staphylococcus carnosus (strain TM300).